The chain runs to 104 residues: Large ribosomal subunit protein uL24 (104 aa).

It belongs to the universal ribosomal protein uL24 family. In terms of assembly, part of the 50S ribosomal subunit.

Functionally, one of two assembly initiator proteins, it binds directly to the 5'-end of the 23S rRNA, where it nucleates assembly of the 50S subunit. Its function is as follows. One of the proteins that surrounds the polypeptide exit tunnel on the outside of the subunit. This Pseudomonas aeruginosa (strain LESB58) protein is Large ribosomal subunit protein uL24.